We begin with the raw amino-acid sequence, 86 residues long: Toxin 3FTx-Dis4 (86 aa).

The first 19 residues, 1–19 (MKTLLLSLVMVGFMYLVSG), serve as a signal peptide directing secretion. Intrachain disulfides connect cysteine 24–cysteine 45, cysteine 38–cysteine 63, and cysteine 79–cysteine 84.

Belongs to the three-finger toxin family. Ancestral subfamily. As to expression, expressed by the venom gland.

The protein localises to the secreted. This Dispholidus typus (Boomslang) protein is Toxin 3FTx-Dis4.